Here is a 72-residue protein sequence, read N- to C-terminus: Protein P13 (72 aa).

Its subcellular location is the virion membrane. This Pseudomonas phage phi6 (Bacteriophage phi-6) protein is Protein P13 (P13).